Reading from the N-terminus, the 45-residue chain is Cytochrome b559 subunit beta (45 aa).

A helical membrane pass occupies residues 20 to 36; it reads WLAVHTLGVPTVFFLGA. H24 contacts heme.

Belongs to the PsbE/PsbF family. Heterodimer of an alpha subunit and a beta subunit. PSII is composed of 1 copy each of membrane proteins PsbA, PsbB, PsbC, PsbD, PsbE, PsbF, PsbH, PsbI, PsbJ, PsbK, PsbL, PsbM, PsbT, PsbX, PsbY, PsbZ, Psb30/Ycf12, peripheral proteins PsbO, CyanoQ (PsbQ), PsbU, PsbV and a large number of cofactors. It forms dimeric complexes. It depends on heme b as a cofactor.

The protein localises to the cellular thylakoid membrane. This b-type cytochrome is tightly associated with the reaction center of photosystem II (PSII). PSII is a light-driven water:plastoquinone oxidoreductase that uses light energy to abstract electrons from H(2)O, generating O(2) and a proton gradient subsequently used for ATP formation. It consists of a core antenna complex that captures photons, and an electron transfer chain that converts photonic excitation into a charge separation. The protein is Cytochrome b559 subunit beta of Nostoc punctiforme (strain ATCC 29133 / PCC 73102).